The following is a 135-amino-acid chain: Galectin-1 (135 aa).

Position 2 is an N-acetylalanine (A2). The 132-residue stretch at G4–E135 folds into the Galectin domain. Residues K13, K19, and K29 each carry the N6-acetyllysine modification. A Phosphoserine modification is found at S30. Residues H45–R49, H53, N62, and W69–E72 contribute to the a beta-D-galactoside site. At K108 the chain carries N6-acetyllysine; alternate. An N6-succinyllysine; alternate modification is found at K108. K128 carries the N6-acetyllysine modification.

Homodimer. Binds LGALS3BP. Interacts with CD2, CD3, CD4, CD6, CD7, CD43, ALCAM and CD45. Interacts with laminin (via poly-N-acetyllactosamine). Interacts with SUSD2. Interacts with cargo receptor TMED10; the interaction mediates the translocation from the cytoplasm into the ERGIC (endoplasmic reticulum-Golgi intermediate compartment) and thereby secretion. Interacts with CD69.

The protein localises to the secreted. It is found in the extracellular space. Its subcellular location is the extracellular matrix. It localises to the cytoplasm. In terms of biological role, lectin that binds beta-galactoside and a wide array of complex carbohydrates. Plays a role in regulating apoptosis, cell proliferation and cell differentiation. Inhibits CD45 protein phosphatase activity and therefore the dephosphorylation of Lyn kinase. Strong inducer of T-cell apoptosis. Plays a negative role in Th17 cell differentiation via activation of the receptor CD69. This Mus musculus (Mouse) protein is Galectin-1 (Lgals1).